The chain runs to 413 residues: Azaphilone biosynthesis cluster protein M (413 aa).

A compositionally biased stretch (polar residues) spans 123-138 (STQPDQVQPNQPTPSF). A disordered region spans residues 123 to 145 (STQPDQVQPNQPTPSFESAAGAS).

The protein operates within secondary metabolite biosynthesis. Its function is as follows. Part of the gene cluster that mediates the biosynthesis of azaterrilone A and other azaphilones, a class of fungal metabolites characterized by a highly oxygenated pyrano-quinone bicyclic core and exhibiting a broad range of bioactivities. The first step of the pathway begins with the non-reducing polyketide synthase tazA that assembles one acetyl-CoA starter unit, five malonyl-CoA units, and catalyzes a series of Claisen condensations, methylation, PT-mediated cyclization, and finally releases the first hexaketide precursor through the R-domain. The tazA product then undergoes reduction on its terminal ketone and the following pyran-ring formation by yet undetermined enzyme(s). Dehydration and enoyl reduction, possibly involving the trans-enoyl reductase tazE leads to the next intermediate. TazD is predicted as an acetyltransferase and might catalyze the acetylation steps leading to the synthesis of azaterrilone A. Azaterrilone A is not the final product of the taz pathway and both the highly reducing polyketide synthase tazB and the dual enzyme tazHJ catalyze late steps of the pathway, leading to the production of the 2 final stereoisomers that contain additional polyketide modification whose structures have still to be determined. The chain is Azaphilone biosynthesis cluster protein M from Aspergillus terreus (strain NIH 2624 / FGSC A1156).